Here is an 82-residue protein sequence, read N- to C-terminus: Small ribosomal subunit protein bS16 (82 aa).

Belongs to the bacterial ribosomal protein bS16 family.

The chain is Small ribosomal subunit protein bS16 from Aliivibrio fischeri (strain ATCC 700601 / ES114) (Vibrio fischeri).